The chain runs to 470 residues: Peripherin (470 aa).

A head region spans residues M1 to Q99. 3'-nitrotyrosine is present on Y17. Phosphoserine occurs at positions 28, 50, and 59. Positions E97–I407 constitute an IF rod domain. Positions E100–A132 are coil 1A. Residues R133–L143 form a linker 1 region. Positions C144–L239 are coil 1B. Positions Q240–T262 are linker 2. Positions A263–S405 are coil 2. 3'-nitrotyrosine is present on Y379. Residues R406–Y470 are tail. Residues N447–Y470 form a disordered region. Residues S454–Y470 show a composition bias toward basic and acidic residues. Residue Y470 is modified to Phosphotyrosine.

The protein belongs to the intermediate filament family. In terms of assembly, forms homodimers (in vitro). Homopolymerizes into a filamentous network (in vitro). Forms heterodimers with NEFL, NEFM or NEFH (in vitro). Interacts with DST (via C-terminus). Interacts with RAB7A; the interaction is direct. Interacts with PRKCE (via phorbol-ester/DAG-type 2 domain). Phosphorylated; phosphorylation increases after nerve injury in regenerating neurons. Expressed in the neurons of the outer hair cells in the organ of Corti and to a lesser extent in type I spiral ganglion cells.

It localises to the cytoplasm. The protein resides in the cytoskeleton. The protein localises to the cell projection. It is found in the axon. Its subcellular location is the perikaryon. Its function is as follows. Class-III neuronal intermediate filament protein. May form an independent structural network without the involvement of other neurofilaments or may cooperate with the neuronal intermediate filament proteins NEFL, NEFH, NEFM and INA to form a filamentous network. Assembly of the neuronal intermediate filaments may be regulated by RAB7A. Plays a role in the development of unmyelinated sensory neurons. May be involved in axon elongation and axon regeneration after injury. Inhibits neurite extension in type II spiral ganglion neurons in the cochlea. The chain is Peripherin (PRPH) from Homo sapiens (Human).